A 311-amino-acid chain; its full sequence is 2-methoxy-6-polyprenyl-1,4-benzoquinol methylase, mitochondrial (311 aa).

The transit peptide at 1–29 (MAAGLCPGRALLSRRGGALWALLGTARGR) directs the protein to the mitochondrion. S-adenosyl-L-methionine contacts are provided by residues T100, D155, and 183 to 184 (NA).

This sequence belongs to the class I-like SAM-binding methyltransferase superfamily. MenG/UbiE family. Component of a multi-subunit COQ enzyme complex, composed of at least COQ3, COQ4, COQ5, COQ6, COQ7 and COQ9.

Its subcellular location is the mitochondrion inner membrane. The enzyme catalyses a 2-methoxy-6-(all-trans-polyprenyl)benzene-1,4-diol + S-adenosyl-L-methionine = a 5-methoxy-2-methyl-3-(all-trans-polyprenyl)benzene-1,4-diol + S-adenosyl-L-homocysteine + H(+). It participates in cofactor biosynthesis; ubiquinone biosynthesis. Its function is as follows. Methyltransferase required for the conversion of 2-polyprenyl-6-methoxy-1,4-benzoquinol (DDMQH2) to 2-polyprenyl-3-methyl-6-methoxy-1,4-benzoquinol (DMQH2). The chain is 2-methoxy-6-polyprenyl-1,4-benzoquinol methylase, mitochondrial from Gallus gallus (Chicken).